The primary structure comprises 150 residues: Ribosome maturation factor RimP (150 aa).

It belongs to the RimP family.

The protein localises to the cytoplasm. Functionally, required for maturation of 30S ribosomal subunits. The protein is Ribosome maturation factor RimP of Yersinia pestis bv. Antiqua (strain Antiqua).